A 351-amino-acid polypeptide reads, in one-letter code: Photosystem II D2 protein (351 aa).

The chain crosses the membrane as a helical span at residues 39–59; the sequence is TAYLAAGGWFTGTTFVTSWYT. Chlorophyll a is bound at residue His116. The helical transmembrane segment at 123-139 threads the bilayer; it reads GFCLRQFEIARLVGIRP. 2 residues coordinate pheophytin a: Gln128 and Asn141. A helical transmembrane segment spans residues 151–164; sequence VFVSVFLLYPLGQA. His196 contacts chlorophyll a. Residues 206–226 traverse the membrane as a helical segment; that stretch reads GALLCAIHGATVENTLFEDGD. His213 and Phe260 together coordinate a plastoquinone. His213 is a binding site for Fe cation. A Fe cation-binding site is contributed by His267. A helical membrane pass occupies residues 277 to 293; sequence GLWTSSIGIVGLALNLR.

The protein belongs to the reaction center PufL/M/PsbA/D family. In terms of assembly, PSII is composed of 1 copy each of membrane proteins PsbA, PsbB, PsbC, PsbD, PsbE, PsbF, PsbH, PsbI, PsbJ, PsbK, PsbL, PsbM, PsbT, PsbX, PsbY, PsbZ, Psb30/Ycf12, at least 3 peripheral proteins of the oxygen-evolving complex and a large number of cofactors. It forms dimeric complexes. The D1/D2 heterodimer binds P680, chlorophylls that are the primary electron donor of PSII, and subsequent electron acceptors. It shares a non-heme iron and each subunit binds pheophytin, quinone, additional chlorophylls, carotenoids and lipids. There is also a Cl(-1) ion associated with D1 and D2, which is required for oxygen evolution. The PSII complex binds additional chlorophylls, carotenoids and specific lipids. serves as cofactor.

It is found in the plastid. The protein resides in the chloroplast thylakoid membrane. The catalysed reaction is 2 a plastoquinone + 4 hnu + 2 H2O = 2 a plastoquinol + O2. Photosystem II (PSII) is a light-driven water:plastoquinone oxidoreductase that uses light energy to abstract electrons from H(2)O, generating O(2) and a proton gradient subsequently used for ATP formation. It consists of a core antenna complex that captures photons, and an electron transfer chain that converts photonic excitation into a charge separation. The D1/D2 (PsbA/PsbD) reaction center heterodimer binds P680, the primary electron donor of PSII as well as several subsequent electron acceptors. D2 is needed for assembly of a stable PSII complex. This is Photosystem II D2 protein from Thalassiosira pseudonana (Marine diatom).